A 523-amino-acid polypeptide reads, in one-letter code: Peptide chain release factor 3 (523 aa).

The tr-type G domain maps to 8–275 (KKRRTFAIIS…TFLEYAPEPH (268 aa)). Residues 17 to 24 (SHPDAGKT), 85 to 89 (DTPGH), and 139 to 142 (NKLD) each bind GTP.

The protein belongs to the TRAFAC class translation factor GTPase superfamily. Classic translation factor GTPase family. PrfC subfamily.

It is found in the cytoplasm. Its function is as follows. Increases the formation of ribosomal termination complexes and stimulates activities of RF-1 and RF-2. It binds guanine nucleotides and has strong preference for UGA stop codons. It may interact directly with the ribosome. The stimulation of RF-1 and RF-2 is significantly reduced by GTP and GDP, but not by GMP. This is Peptide chain release factor 3 from Lactococcus lactis subsp. cremoris (strain SK11).